A 183-amino-acid polypeptide reads, in one-letter code: Large ribosomal subunit protein uL10 (183 aa).

It belongs to the universal ribosomal protein uL10 family. In terms of assembly, part of the ribosomal stalk of the 50S ribosomal subunit. The N-terminus interacts with L11 and the large rRNA to form the base of the stalk. The C-terminus forms an elongated spine to which L12 dimers bind in a sequential fashion forming a multimeric L10(L12)X complex.

Functionally, forms part of the ribosomal stalk, playing a central role in the interaction of the ribosome with GTP-bound translation factors. The chain is Large ribosomal subunit protein uL10 from Mesomycoplasma hyopneumoniae (strain 232) (Mycoplasma hyopneumoniae).